A 450-amino-acid polypeptide reads, in one-letter code: Glucose-6-phosphate isomerase (450 aa).

Catalysis depends on glutamate 290, which acts as the Proton donor. Catalysis depends on residues histidine 311 and lysine 425.

Belongs to the GPI family.

Its subcellular location is the cytoplasm. The enzyme catalyses alpha-D-glucose 6-phosphate = beta-D-fructose 6-phosphate. The protein operates within carbohydrate biosynthesis; gluconeogenesis. It participates in carbohydrate degradation; glycolysis; D-glyceraldehyde 3-phosphate and glycerone phosphate from D-glucose: step 2/4. Catalyzes the reversible isomerization of glucose-6-phosphate to fructose-6-phosphate. This Listeria monocytogenes serovar 1/2a (strain ATCC BAA-679 / EGD-e) protein is Glucose-6-phosphate isomerase.